The sequence spans 289 residues: Light-independent protochlorophyllide reductase iron-sulfur ATP-binding protein (289 aa).

ATP is bound by residues 10–15 and lysine 39; that span reads GIGKST. Residue serine 14 coordinates Mg(2+). 2 residues coordinate [4Fe-4S] cluster: cysteine 95 and cysteine 129. 180 to 181 lines the ATP pocket; that stretch reads NR.

Belongs to the NifH/BchL/ChlL family. As to quaternary structure, homodimer. Protochlorophyllide reductase is composed of three subunits; ChlL, ChlN and ChlB. [4Fe-4S] cluster is required as a cofactor.

It localises to the plastid. It is found in the chloroplast. It carries out the reaction chlorophyllide a + oxidized 2[4Fe-4S]-[ferredoxin] + 2 ADP + 2 phosphate = protochlorophyllide a + reduced 2[4Fe-4S]-[ferredoxin] + 2 ATP + 2 H2O. The protein operates within porphyrin-containing compound metabolism; chlorophyll biosynthesis (light-independent). In terms of biological role, component of the dark-operative protochlorophyllide reductase (DPOR) that uses Mg-ATP and reduced ferredoxin to reduce ring D of protochlorophyllide (Pchlide) to form chlorophyllide a (Chlide). This reaction is light-independent. The L component serves as a unique electron donor to the NB-component of the complex, and binds Mg-ATP. This is Light-independent protochlorophyllide reductase iron-sulfur ATP-binding protein from Tetradesmus obliquus (Green alga).